The chain runs to 325 residues: Peroxidase 1 (325 aa).

A signal peptide spans 1 to 21; sequence MAIKNILALVVLLSVVGVSVA. Intrachain disulfides connect Cys-35-Cys-113, Cys-68-Cys-73, Cys-119-Cys-321, and Cys-198-Cys-230. The active-site Proton acceptor is His-66. Asp-67, Val-70, Gly-72, Asp-74, and Ser-76 together coordinate Ca(2+). Pro-161 is a substrate binding site. Residue His-191 coordinates heme b. Thr-192 lines the Ca(2+) pocket. N-linked (GlcNAc...) asparagine glycosylation is present at Asn-207. Ca(2+) contacts are provided by Asp-242, Ser-245, and Asp-250.

Belongs to the peroxidase family. Classical plant (class III) peroxidase subfamily. Heme b is required as a cofactor. Requires Ca(2+) as cofactor. As to expression, slightly expressed in roots.

The protein resides in the secreted. The catalysed reaction is 2 a phenolic donor + H2O2 = 2 a phenolic radical donor + 2 H2O. In terms of biological role, removal of H(2)O(2), oxidation of toxic reductants, biosynthesis and degradation of lignin, suberization, auxin catabolism, response to environmental stresses such as wounding, pathogen attack and oxidative stress. These functions might be dependent on each isozyme/isoform in each plant tissue. The sequence is that of Peroxidase 1 (PER1) from Arabidopsis thaliana (Mouse-ear cress).